The following is a 143-amino-acid chain: D-aminoacyl-tRNA deacylase (143 aa).

The Gly-cisPro motif, important for rejection of L-amino acids signature appears at 135–136 (GP).

It belongs to the DTD family. As to quaternary structure, homodimer.

Its subcellular location is the cytoplasm. The catalysed reaction is glycyl-tRNA(Ala) + H2O = tRNA(Ala) + glycine + H(+). It carries out the reaction a D-aminoacyl-tRNA + H2O = a tRNA + a D-alpha-amino acid + H(+). Its function is as follows. An aminoacyl-tRNA editing enzyme that deacylates mischarged D-aminoacyl-tRNAs. Also deacylates mischarged glycyl-tRNA(Ala), protecting cells against glycine mischarging by AlaRS. Acts via tRNA-based rather than protein-based catalysis; rejects L-amino acids rather than detecting D-amino acids in the active site. By recycling D-aminoacyl-tRNA to D-amino acids and free tRNA molecules, this enzyme counteracts the toxicity associated with the formation of D-aminoacyl-tRNA entities in vivo and helps enforce protein L-homochirality. The protein is D-aminoacyl-tRNA deacylase of Mycolicibacterium paratuberculosis (strain ATCC BAA-968 / K-10) (Mycobacterium paratuberculosis).